A 105-amino-acid polypeptide reads, in one-letter code: Large ribosomal subunit protein uL24 (105 aa).

Belongs to the universal ribosomal protein uL24 family. In terms of assembly, part of the 50S ribosomal subunit.

One of two assembly initiator proteins, it binds directly to the 5'-end of the 23S rRNA, where it nucleates assembly of the 50S subunit. In terms of biological role, one of the proteins that surrounds the polypeptide exit tunnel on the outside of the subunit. In Tolumonas auensis (strain DSM 9187 / NBRC 110442 / TA 4), this protein is Large ribosomal subunit protein uL24.